A 430-amino-acid chain; its full sequence is UDP-N-acetylglucosamine 1-carboxyvinyltransferase 1 (430 aa).

22 to 23 (KN) provides a ligand contact to phosphoenolpyruvate. Arg-93 contacts UDP-N-acetyl-alpha-D-glucosamine. The Proton donor role is filled by Cys-117. Cys-117 bears the 2-(S-cysteinyl)pyruvic acid O-phosphothioketal mark. Residues 122-126 (RPVDL), Asp-305, and Val-327 contribute to the UDP-N-acetyl-alpha-D-glucosamine site.

This sequence belongs to the EPSP synthase family. MurA subfamily.

The protein resides in the cytoplasm. The catalysed reaction is phosphoenolpyruvate + UDP-N-acetyl-alpha-D-glucosamine = UDP-N-acetyl-3-O-(1-carboxyvinyl)-alpha-D-glucosamine + phosphate. It participates in cell wall biogenesis; peptidoglycan biosynthesis. Cell wall formation. Adds enolpyruvyl to UDP-N-acetylglucosamine. The protein is UDP-N-acetylglucosamine 1-carboxyvinyltransferase 1 of Listeria monocytogenes serotype 4b (strain F2365).